The primary structure comprises 94 residues: UPF0381 protein YfcZ (94 aa).

The protein belongs to the UPF0381 family.

This Escherichia coli O6:H1 (strain CFT073 / ATCC 700928 / UPEC) protein is UPF0381 protein YfcZ (yfcZ).